The primary structure comprises 108 residues: Monothiol bacilliredoxin BrxC (108 aa).

Cysteine 31 is subject to S-bacillithiol cysteine disulfide.

Interacts with AbrB, BdhA, Bdr, BrxB, FolD, GapA, GapB, GatA, PfkA, PyrAA, PyrAB, PyrE, PyrG, PyrH, RpsB, RpsK, RpsL, SalA, SucC, Tuf and YtsJ. In terms of processing, cys can react with bacillithiol (BSH) to form mixed disulfides. S-bacillithiolation protects Cys residues against overoxidation by acting as a redox switch in response to oxidative stress.

In terms of biological role, S-bacillithiolation is the formation of mixed disulfide bonds between protein thiols and the general thiol reductant bacillithiol (BSH) under oxidative stress. BSH is an equivalent of glutathione (GSH) in Firmicutes. This protein is a monothiol bacilliredoxin, which debacillithiolates (removes BSH) the S-bacillithiolated glyceraldehyde-3-phosphate dehydrogenases (GAPDHs) GapA and GapB in vivo and probably a number of other oxidized cytosolic proteins. Debacillithiolates the S-bacillithiolated Bdr (Bdr-SSB) and BrxB (BrxB-SSB) in vitro. Involved in maintaining redox homeostasis in response to disulfide stress conditions. The protein is Monothiol bacilliredoxin BrxC of Bacillus subtilis (strain 168).